Reading from the N-terminus, the 144-residue chain is Urease subunit beta (144 aa).

The segment covering 110–119 (HAAPAAPAIP) has biased composition (low complexity). A disordered region spans residues 110–144 (HAAPAAPAIPARHESAAGDAPSPLKERAGFDNETR). The span at 133 to 144 (LKERAGFDNETR) shows a compositional bias: basic and acidic residues.

Belongs to the urease beta subunit family. Heterotrimer of UreA (gamma), UreB (beta) and UreC (alpha) subunits. Three heterotrimers associate to form the active enzyme.

Its subcellular location is the cytoplasm. It carries out the reaction urea + 2 H2O + H(+) = hydrogencarbonate + 2 NH4(+). It participates in nitrogen metabolism; urea degradation; CO(2) and NH(3) from urea (urease route): step 1/1. In Micrococcus luteus (strain ATCC 4698 / DSM 20030 / JCM 1464 / CCM 169 / CCUG 5858 / IAM 1056 / NBRC 3333 / NCIMB 9278 / NCTC 2665 / VKM Ac-2230) (Micrococcus lysodeikticus), this protein is Urease subunit beta.